Reading from the N-terminus, the 86-residue chain is Cell division topological specificity factor (86 aa).

It belongs to the MinE family.

Prevents the cell division inhibition by proteins MinC and MinD at internal division sites while permitting inhibition at polar sites. This ensures cell division at the proper site by restricting the formation of a division septum at the midpoint of the long axis of the cell. The chain is Cell division topological specificity factor from Shewanella pealeana (strain ATCC 700345 / ANG-SQ1).